Consider the following 219-residue polypeptide: Putative protease Do-like 6, chloroplastic (219 aa).

Residues M1–C45 constitute a chloroplast transit peptide. The interval K61–Y216 is serine protease. Catalysis depends on charge relay system residues H99, D130, and S208.

The protein belongs to the peptidase S1B family.

Its subcellular location is the plastid. It localises to the chloroplast. Putative serine protease. In Arabidopsis thaliana (Mouse-ear cress), this protein is Putative protease Do-like 6, chloroplastic (DEGP6).